The sequence spans 491 residues: Cytochrome P450 2K3 (491 aa).

Cys-434 contributes to the heme binding site.

It belongs to the cytochrome P450 family. The cofactor is heme.

It localises to the endoplasmic reticulum membrane. The protein resides in the microsome membrane. It catalyses the reaction an organic molecule + reduced [NADPH--hemoprotein reductase] + O2 = an alcohol + oxidized [NADPH--hemoprotein reductase] + H2O + H(+). This is Cytochrome P450 2K3 (cyp2k3) from Oncorhynchus mykiss (Rainbow trout).